Consider the following 470-residue polypeptide: 3-isopropylmalate dehydratase large subunit (470 aa).

Residues cysteine 351, cysteine 411, and cysteine 414 each coordinate [4Fe-4S] cluster.

Belongs to the aconitase/IPM isomerase family. LeuC type 1 subfamily. In terms of assembly, heterodimer of LeuC and LeuD. Requires [4Fe-4S] cluster as cofactor.

It catalyses the reaction (2R,3S)-3-isopropylmalate = (2S)-2-isopropylmalate. It functions in the pathway amino-acid biosynthesis; L-leucine biosynthesis; L-leucine from 3-methyl-2-oxobutanoate: step 2/4. Catalyzes the isomerization between 2-isopropylmalate and 3-isopropylmalate, via the formation of 2-isopropylmaleate. In Rhodopseudomonas palustris (strain BisA53), this protein is 3-isopropylmalate dehydratase large subunit.